The following is a 282-amino-acid chain: Pantothenate synthetase (282 aa).

30–37 is a binding site for ATP; it reads MGFLHDGH. His37 acts as the Proton donor in catalysis. Gln60 is a (R)-pantoate binding site. Gln60 contributes to the beta-alanine binding site. ATP is bound at residue 146 to 149; it reads GQKD. Gln152 provides a ligand contact to (R)-pantoate. ATP is bound by residues Ile175 and 183–186; that span reads KSSR.

Belongs to the pantothenate synthetase family. Homodimer.

The protein resides in the cytoplasm. It carries out the reaction (R)-pantoate + beta-alanine + ATP = (R)-pantothenate + AMP + diphosphate + H(+). Its pathway is cofactor biosynthesis; (R)-pantothenate biosynthesis; (R)-pantothenate from (R)-pantoate and beta-alanine: step 1/1. Its function is as follows. Catalyzes the condensation of pantoate with beta-alanine in an ATP-dependent reaction via a pantoyl-adenylate intermediate. The chain is Pantothenate synthetase from Campylobacter jejuni subsp. jejuni serotype O:23/36 (strain 81-176).